The following is a 39-amino-acid chain: B melanoma antigen 4 (39 aa).

Positions M1–A17 are cleaved as a signal peptide.

The protein belongs to the BAGE family. Not expressed in normal tissues except in testis. Expressed in melanoma, bladder and lung carcinomas.

The protein resides in the secreted. Functionally, unknown. Candidate gene encoding tumor antigens. This chain is B melanoma antigen 4 (BAGE4), found in Homo sapiens (Human).